Consider the following 210-residue polypeptide: Adenylate kinase (210 aa).

ATP is bound at residue 10 to 15; the sequence is GSGKGT. The interval 30 to 59 is NMP; the sequence is STGDLFRANISNATPLGKEIKQIVENGQLV. Residues threonine 31, arginine 36, 57 to 59, 85 to 88, and glutamine 92 each bind AMP; these read QLV and GFPR. Residues 121-158 are LID; the sequence is GRRICQSCGGIFNIYTLPTKEKGICDLCKGSLYQRKDD. Arginine 122 provides a ligand contact to ATP. Residues cysteine 125 and cysteine 128 each contribute to the Zn(2+) site. 131-132 contributes to the ATP binding site; the sequence is IF. Residues cysteine 145 and cysteine 148 each contribute to the Zn(2+) site. 2 residues coordinate AMP: arginine 155 and arginine 166. Lysine 194 contributes to the ATP binding site.

Belongs to the adenylate kinase family. In terms of assembly, monomer.

Its subcellular location is the cytoplasm. It catalyses the reaction AMP + ATP = 2 ADP. Its pathway is purine metabolism; AMP biosynthesis via salvage pathway; AMP from ADP: step 1/1. In terms of biological role, catalyzes the reversible transfer of the terminal phosphate group between ATP and AMP. Plays an important role in cellular energy homeostasis and in adenine nucleotide metabolism. The sequence is that of Adenylate kinase from Borrelia turicatae (strain 91E135).